We begin with the raw amino-acid sequence, 180 residues long: E3 ubiquitin-protein ligase RNF5 (180 aa).

A2 carries the N-acetylalanine modification. The RING-type zinc finger occupies 27 to 68 (CNICLETAREAVVSVCGHLYCWPCLHQWLETRPERQECPVCK). Residues 79–110 (LYGRGSQKPQDPRLKTPPRPQGQRPAPESRGG) are disordered. The residue at position 84 (S84) is a Phosphoserine. At T94 the chain carries Phosphothreonine. S107 carries the phosphoserine modification. The next 2 helical transmembrane spans lie at 118-138 (GGFH…TTVF) and 160-180 (SWQD…LLSI).

It belongs to the RNF5 family. Interacts with PXN. Interacts with Salmonella typhimurium sopA. Interacts with JKAMP. Interacts with STING1; the interaction of endogenous proteins is dependent on viral infection. As to expression, widely expressed.

It is found in the cell membrane. It localises to the mitochondrion membrane. Its subcellular location is the endoplasmic reticulum membrane. The catalysed reaction is S-ubiquitinyl-[E2 ubiquitin-conjugating enzyme]-L-cysteine + [acceptor protein]-L-lysine = [E2 ubiquitin-conjugating enzyme]-L-cysteine + N(6)-ubiquitinyl-[acceptor protein]-L-lysine.. The protein operates within protein modification; protein ubiquitination. Functionally, membrane-bound E3 ubiquitin-protein ligase that mediates ubiquitination of target proteins. May function together with E2 ubiquitin-conjugating enzymes UBE2D1/UBCH5A and UBE2D2/UBC4. Mediates ubiquitination of PXN/paxillin,thereby regulating cell motility and localization of PXN/paxillin. Catalyzes ubiquitination of Salmonella type III secreted protein sopA. Mediates the 'Lys-63'-linked polyubiquitination of JKAMP thereby regulating JKAMP function by decreasing its association with components of the proteasome and ERAD; the ubiquitination appears to involve E2 ubiquitin-conjugating enzyme UBE2N. Mediates the 'Lys-48'-linked polyubiquitination of STING1 at 'Lys-150' leading to its proteasomal degradation; the ubiquitination occurs in mitochondria after viral transfection and regulates antiviral responses. Catalyzes ubiquitination and subsequent degradation of ATG4B, thereby inhibiting autophagy. In Homo sapiens (Human), this protein is E3 ubiquitin-protein ligase RNF5.